A 210-amino-acid chain; its full sequence is Dephospho-CoA kinase (210 aa).

The DPCK domain occupies 15–210; it reads VLGLTGGIGC…HKGYLKLALK (196 aa). 23-28 is a binding site for ATP; the sequence is GCGKTA.

This sequence belongs to the CoaE family.

It localises to the cytoplasm. It catalyses the reaction 3'-dephospho-CoA + ATP = ADP + CoA + H(+). It functions in the pathway cofactor biosynthesis; coenzyme A biosynthesis; CoA from (R)-pantothenate: step 5/5. In terms of biological role, catalyzes the phosphorylation of the 3'-hydroxyl group of dephosphocoenzyme A to form coenzyme A. This chain is Dephospho-CoA kinase, found in Pseudoalteromonas translucida (strain TAC 125).